The chain runs to 236 residues: Putative glutamine amidotransferase-like protein YvdE (236 aa).

In terms of domain architecture, Glutamine amidotransferase type-1 spans 17–236 (SPFWWNKVSY…IFEIFANGTI (220 aa)).

This chain is Putative glutamine amidotransferase-like protein YvdE (yvdE), found in Lactococcus lactis subsp. lactis (strain IL1403) (Streptococcus lactis).